The primary structure comprises 425 residues: Imidazolonepropionase (425 aa).

Fe(3+) contacts are provided by H78 and H80. 2 residues coordinate Zn(2+): H78 and H80. 4-imidazolone-5-propanoate contacts are provided by R87, Y150, and H183. Residue Y150 coordinates N-formimidoyl-L-glutamate. H248 is a binding site for Fe(3+). Residue H248 coordinates Zn(2+). Q251 provides a ligand contact to 4-imidazolone-5-propanoate. D323 lines the Fe(3+) pocket. D323 is a binding site for Zn(2+). Positions 325 and 327 each coordinate N-formimidoyl-L-glutamate. Position 328 (T328) interacts with 4-imidazolone-5-propanoate.

It belongs to the metallo-dependent hydrolases superfamily. HutI family. Zn(2+) is required as a cofactor. Requires Fe(3+) as cofactor.

It is found in the cytoplasm. It catalyses the reaction 4-imidazolone-5-propanoate + H2O = N-formimidoyl-L-glutamate. It participates in amino-acid degradation; L-histidine degradation into L-glutamate; N-formimidoyl-L-glutamate from L-histidine: step 3/3. In terms of biological role, catalyzes the hydrolytic cleavage of the carbon-nitrogen bond in imidazolone-5-propanoate to yield N-formimidoyl-L-glutamate. It is the third step in the universal histidine degradation pathway. This is Imidazolonepropionase from Polaromonas sp. (strain JS666 / ATCC BAA-500).